The chain runs to 142 residues: Universal stress protein D (142 aa).

It belongs to the universal stress protein A family.

It localises to the cytoplasm. Functionally, required for resistance to DNA-damaging agents. In Escherichia coli O157:H7, this protein is Universal stress protein D (uspD).